The following is a 1052-amino-acid chain: Multidrug resistance protein MdtB (1052 aa).

A run of 11 helical transmembrane segments spans residues 15-37 (LFIL…GIIG), 345-362 (FELL…YLFL), 367-389 (ATII…MYFL), 396-418 (LTLM…VIEN), 438-460 (GEIG…PLLF), 472-494 (FAVT…TPMM), 535-557 (HPWL…YLLI), 867-889 (LWLI…ESFI), 909-931 (LMLT…IGIV), 968-990 (ILMT…GVGA), and 1000-1022 (MVGG…YLLF). Positions 1032–1052 (KNRHRDEDIDSSELLNGQEPQ) are disordered.

The protein belongs to the resistance-nodulation-cell division (RND) (TC 2.A.6) family. MdtB subfamily. Part of a tripartite efflux system composed of MdtA, MdtB and MdtC. MdtB forms a heteromultimer with MdtC.

It is found in the cell inner membrane. This is Multidrug resistance protein MdtB from Yersinia pseudotuberculosis serotype I (strain IP32953).